The chain runs to 458 residues: SLIT-ROBO Rho GTPase-activating protein 2B (458 aa).

Residues 22–324 form the F-BAR domain; the sequence is KEIRAQLTEQ…AVENLDATSD (303 aa). The segment covering 181-203 has biased composition (basic and acidic residues); sequence LKEAEKQEEKQIGKSVKQEDRQT. The segment at 181-214 is disordered; the sequence is LKEAEKQEEKQIGKSVKQEDRQTPRSPDSTANVR. The stretch at 362 to 400 forms a coiled coil; the sequence is QSELLQRCQQLQSRLSTLKIENEEVKKTMEATLQTIQDI.

In terms of assembly, may interact with SRGAP2; formation of the heterodimer alters SRGAP2 function.

In terms of biological role, may regulate cell migration and differentiation through interaction with and inhibition of SRGAP2. In contrast to SRGAP2C, it is not able to induce long-lasting changes in synaptic density throughout adulthood. In Homo sapiens (Human), this protein is SLIT-ROBO Rho GTPase-activating protein 2B (SRGAP2B).